We begin with the raw amino-acid sequence, 422 residues long: Keratan-sulfate endo-1,4-beta-galactosidase (422 aa).

The signal sequence occupies residues 1–46; it reads MRKTKFWLVLSLIATSLSIFACKKDSTATKNPIPEVSKAKASTKLL. The region spanning 47-292 is the GH16 domain; that stretch reads NATTVATTDY…YVRVYKLPLF (246 aa). Glu171 functions as the Nucleophile in the catalytic mechanism. Catalysis depends on Glu176, which acts as the Proton donor. Residues 291–406 form the CBM-cenC domain; it reads LFSNGDFESG…NTTATVYFYK (116 aa).

The protein belongs to the glycosyl hydrolase 16 family.

It is found in the secreted. It catalyses the reaction Endohydrolysis of (1-&gt;4)-beta-D-galactosidic linkages in keratan sulfate.. Functionally, hydrolyzes internal endo-beta-galactosyl linkages in keratan sulfate and in various neolacto-type glycosphingolipids, producing sulfated and non-sulfated disaccharides, and glucosylceramides respectivly. The polypeptide is Keratan-sulfate endo-1,4-beta-galactosidase (Sphingobacterium multivorum).